A 570-amino-acid polypeptide reads, in one-letter code: Urease subunit alpha (570 aa).

In terms of domain architecture, Urease spans 132–570 (GGIDTHVHFL…VPMARRYFLF (439 aa)). Ni(2+) is bound by residues His137, His139, and Lys220. At Lys220 the chain carries N6-carboxylysine. Residue His222 participates in substrate binding. Residues His249 and His275 each contribute to the Ni(2+) site. Residue His323 is the Proton donor of the active site. Asp363 contributes to the Ni(2+) binding site.

This sequence belongs to the metallo-dependent hydrolases superfamily. Urease alpha subunit family. As to quaternary structure, heterotrimer of UreA (gamma), UreB (beta) and UreC (alpha) subunits. Three heterotrimers associate to form the active enzyme. Ni cation serves as cofactor. In terms of processing, carboxylation allows a single lysine to coordinate two nickel ions.

Its subcellular location is the cytoplasm. It carries out the reaction urea + 2 H2O + H(+) = hydrogencarbonate + 2 NH4(+). The protein operates within nitrogen metabolism; urea degradation; CO(2) and NH(3) from urea (urease route): step 1/1. In Corynebacterium glutamicum (strain ATCC 13032 / DSM 20300 / JCM 1318 / BCRC 11384 / CCUG 27702 / LMG 3730 / NBRC 12168 / NCIMB 10025 / NRRL B-2784 / 534), this protein is Urease subunit alpha.